The primary structure comprises 178 residues: Crossover junction endodeoxyribonuclease RuvC (178 aa).

Active-site residues include Asp-14, Glu-73, and Asp-145. Mg(2+) contacts are provided by Asp-14, Glu-73, and Asp-145.

The protein belongs to the RuvC family. In terms of assembly, homodimer which binds Holliday junction (HJ) DNA. The HJ becomes 2-fold symmetrical on binding to RuvC with unstacked arms; it has a different conformation from HJ DNA in complex with RuvA. In the full resolvosome a probable DNA-RuvA(4)-RuvB(12)-RuvC(2) complex forms which resolves the HJ. Mg(2+) is required as a cofactor.

It localises to the cytoplasm. It catalyses the reaction Endonucleolytic cleavage at a junction such as a reciprocal single-stranded crossover between two homologous DNA duplexes (Holliday junction).. The RuvA-RuvB-RuvC complex processes Holliday junction (HJ) DNA during genetic recombination and DNA repair. Endonuclease that resolves HJ intermediates. Cleaves cruciform DNA by making single-stranded nicks across the HJ at symmetrical positions within the homologous arms, yielding a 5'-phosphate and a 3'-hydroxyl group; requires a central core of homology in the junction. The consensus cleavage sequence is 5'-(A/T)TT(C/G)-3'. Cleavage occurs on the 3'-side of the TT dinucleotide at the point of strand exchange. HJ branch migration catalyzed by RuvA-RuvB allows RuvC to scan DNA until it finds its consensus sequence, where it cleaves and resolves the cruciform DNA. The chain is Crossover junction endodeoxyribonuclease RuvC from Nitrosomonas eutropha (strain DSM 101675 / C91 / Nm57).